Consider the following 286-residue polypeptide: Thymidylate synthase (286 aa).

DUMP is bound by residues arginine 21 and 136–137 (RR). Cysteine 156 serves as the catalytic Nucleophile. Residues 176 to 179 (RSVD), asparagine 187, and 217 to 219 (HIY) contribute to the dUMP site. Aspartate 179 serves as a coordination point for (6R)-5,10-methylene-5,6,7,8-tetrahydrofolate. Position 285 (alanine 285) interacts with (6R)-5,10-methylene-5,6,7,8-tetrahydrofolate.

Belongs to the thymidylate synthase family. Homodimer.

It carries out the reaction dUMP + (6R)-5,10-methylene-5,6,7,8-tetrahydrofolate = 7,8-dihydrofolate + dTMP. The protein operates within pyrimidine metabolism; dTTP biosynthesis. This is Thymidylate synthase (TD) from Enterobacteria phage T4 (Bacteriophage T4).